The primary structure comprises 172 residues: Shikimate kinase (172 aa).

ATP is bound at residue 11–16 (GCGKST). Ser15 serves as a coordination point for Mg(2+). Substrate is bound by residues Asp33, Arg57, and Gly80. Arg120 is an ATP binding site. Arg142 is a substrate binding site. ATP is bound at residue Arg158.

It belongs to the shikimate kinase family. In terms of assembly, monomer. The cofactor is Mg(2+).

The protein resides in the cytoplasm. The catalysed reaction is shikimate + ATP = 3-phosphoshikimate + ADP + H(+). Its pathway is metabolic intermediate biosynthesis; chorismate biosynthesis; chorismate from D-erythrose 4-phosphate and phosphoenolpyruvate: step 5/7. In terms of biological role, catalyzes the specific phosphorylation of the 3-hydroxyl group of shikimic acid using ATP as a cosubstrate. The polypeptide is Shikimate kinase (Flavobacterium johnsoniae (strain ATCC 17061 / DSM 2064 / JCM 8514 / BCRC 14874 / CCUG 350202 / NBRC 14942 / NCIMB 11054 / UW101) (Cytophaga johnsonae)).